The sequence spans 282 residues: tRNA uridine(34) hydroxylase (282 aa).

Residues 128 to 222 (EGRPVVMLDT…YFEEVGGDHY (95 aa)) enclose the Rhodanese domain. Residue C182 is the Cysteine persulfide intermediate of the active site.

The protein belongs to the TrhO family.

The enzyme catalyses uridine(34) in tRNA + AH2 + O2 = 5-hydroxyuridine(34) in tRNA + A + H2O. Its function is as follows. Catalyzes oxygen-dependent 5-hydroxyuridine (ho5U) modification at position 34 in tRNAs. This is tRNA uridine(34) hydroxylase from Cupriavidus pinatubonensis (strain JMP 134 / LMG 1197) (Cupriavidus necator (strain JMP 134)).